The primary structure comprises 493 residues: Guanosine-5'-triphosphate,3'-diphosphate pyrophosphatase (493 aa).

The protein belongs to the GppA/Ppx family. GppA subfamily.

It carries out the reaction guanosine 3'-diphosphate 5'-triphosphate + H2O = guanosine 3',5'-bis(diphosphate) + phosphate + H(+). Its pathway is purine metabolism; ppGpp biosynthesis; ppGpp from GTP: step 2/2. In terms of biological role, catalyzes the conversion of pppGpp to ppGpp. Guanosine pentaphosphate (pppGpp) is a cytoplasmic signaling molecule which together with ppGpp controls the 'stringent response', an adaptive process that allows bacteria to respond to amino acid starvation, resulting in the coordinated regulation of numerous cellular activities. This chain is Guanosine-5'-triphosphate,3'-diphosphate pyrophosphatase, found in Salmonella dublin (strain CT_02021853).